Consider the following 317-residue polypeptide: MQLQLISIVLILHFMEYTNCQHHGSRHRGNKQVSGVSSQGCQGGCQTCSVYNGCLTCKPKLFIHLERDGMRQIGVCLASCPNGFYGTRSPDRNDCIKCGSECDSCFNRNFCLRCRAGSYLHKGKCMESCPDGLVPSDTKKECVAACPALCDLCQNSDTCTRCVPGHFLHAGQCHHVCPDEFEPNDSMECIPTVHCEVSEWSEWGTCSRSGKTCGFKWGEETRTRKVLQNPSPMGSPCPPTSEKRECFVKKKRCKPPKGQRRGEKKKRFNLQEKVTAEARRERKREREKETIDREESENRNKTEQRRRRDQSRDAGTV.

Positions 1–20 are cleaved as a signal peptide; that stretch reads MQLQLISIVLILHFMEYTNC. FU repeat units lie at residues 34–86, 92–135, and 139–183; these read SGVS…GFYG, RNDC…GLVP, and KKEC…EFEP. Disulfide bonds link cysteine 41/cysteine 48, cysteine 45/cysteine 54, cysteine 57/cysteine 76, cysteine 80/cysteine 95, cysteine 98/cysteine 105, cysteine 102/cysteine 111, cysteine 114/cysteine 125, cysteine 129/cysteine 189, cysteine 195/cysteine 237, cysteine 206/cysteine 213, and cysteine 246/cysteine 253. Asparagine 184 carries an N-linked (GlcNAc...) asparagine glycan. The TSP type-1 domain maps to 194-254; sequence HCEVSEWSEW…ECFVKKKRCK (61 aa). The span at 251–268 shows a compositional bias: basic residues; sequence KRCKPPKGQRRGEKKKRF. The interval 251-317 is disordered; that stretch reads KRCKPPKGQR…RDQSRDAGTV (67 aa). Residues 274–303 show a composition bias toward basic and acidic residues; it reads VTAEARRERKREREKETIDREESENRNKTE. N-linked (GlcNAc...) asparagine glycosylation is present at asparagine 300.

Belongs to the R-spondin family. In terms of assembly, binds heparin.

Its subcellular location is the secreted. Activator of the canonical Wnt signaling pathway by acting as a ligand for lgr4-6 receptors, which acts as a key regulator of angiogenesis. Upon binding to lgr4-6 (lgr4, lgr5 or lgr6), lgr4-6 associate with phosphorylated lrp6 and frizzled receptors that are activated by extracellular Wnt receptors, triggering the canonical Wnt signaling pathway to increase expression of target genes. Acts both in the canonical. Wnt/beta-catenin-dependent pathway and in non-canonical Wnt signaling pathway. Acts as a key regulator of angiogenesis by controlling vascular stability and pruning: acts by activating the non-canonical Wnt signaling pathway in endothelial cells. Can also amplify Wnt signaling pathway independently of LGR4-6 receptors, possibly by acting as a direct antagonistic ligand to RNF43 and ZNRF3. This is R-spondin-3 (rspo3) from Danio rerio (Zebrafish).